A 186-amino-acid chain; its full sequence is NADH-dependent FMN reductase SfnE (186 aa).

This sequence belongs to the SsuE family.

The catalysed reaction is FMNH2 + NAD(+) = FMN + NADH + 2 H(+). In terms of biological role, involved in the dimethyl sulfide degradation pathway. Catalyzes the NADH-dependent reduction of FMN. The chain is NADH-dependent FMN reductase SfnE from Pseudomonas putida (Arthrobacter siderocapsulatus).